Reading from the N-terminus, the 101-residue chain is Ubiquitin-related modifier 1 (101 aa).

At Gly-101 the chain carries 1-thioglycine. Gly-101 is covalently cross-linked (Glycyl lysine isopeptide (Gly-Lys) (interchain with K-? in acceptor proteins)).

Belongs to the URM1 family. In terms of processing, C-terminal thiocarboxylation occurs in 2 steps, it is first acyl-adenylated (-COAMP) via the hesA/moeB/thiF part of UBA4, then thiocarboxylated (-COSH) via the rhodanese domain of UBA4.

It localises to the cytoplasm. The protein operates within tRNA modification; 5-methoxycarbonylmethyl-2-thiouridine-tRNA biosynthesis. Its function is as follows. Acts as a sulfur carrier required for 2-thiolation of mcm(5)S(2)U at tRNA wobble positions of cytosolic tRNA(Lys), tRNA(Glu) and tRNA(Gln). Serves as sulfur donor in tRNA 2-thiolation reaction by being thiocarboxylated (-COSH) at its C-terminus by the MOCS3 homolog UBA4. The sulfur is then transferred to tRNA to form 2-thiolation of mcm(5)S(2)U. Prior mcm(5) tRNA modification by the elongator complex is required for 2-thiolation. Also acts as a ubiquitin-like protein (UBL) that is covalently conjugated via an isopeptide bond to lysine residues of target proteins such as AHP1. The thiocarboxylated form serves as substrate for conjugation and oxidative stress specifically induces the formation of UBL-protein conjugates. In Kluyveromyces lactis (strain ATCC 8585 / CBS 2359 / DSM 70799 / NBRC 1267 / NRRL Y-1140 / WM37) (Yeast), this protein is Ubiquitin-related modifier 1.